Reading from the N-terminus, the 312-residue chain is Formimidoylglutamase (312 aa).

6 residues coordinate Mn(2+): His128, Asp153, His155, Asp157, Asp240, and Asp242.

It belongs to the arginase family. The cofactor is Mn(2+).

It carries out the reaction N-formimidoyl-L-glutamate + H2O = formamide + L-glutamate. Its pathway is amino-acid degradation; L-histidine degradation into L-glutamate; L-glutamate from N-formimidoyl-L-glutamate (hydrolase route): step 1/1. In terms of biological role, catalyzes the conversion of N-formimidoyl-L-glutamate to L-glutamate and formamide. This chain is Formimidoylglutamase, found in Enterobacter sp. (strain 638).